Here is a 1464-residue protein sequence, read N- to C-terminus: Secretory phospholipase A2 receptor (1464 aa).

The signal sequence occupies residues 1 to 22 (MLLSPSLLLPLLLLLGAPRGCA). At 23-1398 (EGVAAALTPE…ELPEKGPSHS (1376 aa)) the chain is on the extracellular side. The Ricin B-type lectin domain maps to 40 to 163 (KGIFVIQSES…GSGGGDICEY (124 aa)). Cystine bridges form between cysteine 53/cysteine 66, cysteine 91/cysteine 108, cysteine 180/cysteine 206, cysteine 194/cysteine 221, cysteine 262/cysteine 356, cysteine 332/cysteine 348, cysteine 408/cysteine 503, cysteine 480/cysteine 495, cysteine 619/cysteine 636, cysteine 701/cysteine 798, cysteine 776/cysteine 790, cysteine 842/cysteine 939, cysteine 916/cysteine 931, cysteine 1069/cysteine 1089, cysteine 1211/cysteine 1225, cysteine 1282/cysteine 1378, and cysteine 1356/cysteine 1370. Asparagine 95 carries an N-linked (GlcNAc...) asparagine glycan. The Fibronectin type-II domain occupies 175-223 (AHGMPCMFPFQYNHQWHHECTREGREDDLLWCATTSRYERDEKWGFCPD). 8 C-type lectin domains span residues 240 to 357 (NSHI…YVCK), 387 to 504 (YNRN…YVCK), 524 to 645 (HGGF…MSLC), 675 to 799 (GLAS…WICK), 821 to 940 (YQDA…SICK), 967 to 1098 (FNYK…GFVC), 1123 to 1234 (YGNR…GAIC), and 1259 to 1379 (FKSN…FICK). N-linked (GlcNAc...) asparagine glycosylation occurs at asparagine 456. A helical transmembrane segment spans residues 1399-1419 (IIPLAVVLTLIVIVAICTLSF). The Cytoplasmic portion of the chain corresponds to 1420-1464 (CIYKHNGGFFRRLAGFRNPYYPATNFSTVHLEENILISDLEKSDQ). Positions 1437–1443 (NPYYPAT) match the Endocytosis signal motif.

In terms of assembly, interacts with sPLA2-IB/PLA2G1B; this interaction mediates intracellular signaling as well as clearance of extracellular sPLA2-IB/PLA2G1B via endocytotic pathway. Interacts with sPLA2-X/PLA2G10; this interaction mediates sPLA2-X/PLA2G10 clearance and inactivation. Post-translationally, the secretory phospholipase A2 receptor form may be produced by the action of metalloproteinases. It contains all extracellular domains and only lacks transmembrane and cytosolic regions. It is however unclear whether this form is produced by proteolytic cleavage as suggested by some experiments, or by alternative splicing.

It localises to the cell membrane. The protein resides in the secreted. In terms of biological role, receptor for secretory phospholipase A2 (sPLA2). Also able to bind to snake PA2-like toxins. Although its precise function remains unclear, binding of sPLA2 to its receptor participates in both positive and negative regulation of sPLA2 functions as well as clearance of sPLA2. Binding of sPLA2-IB/PLA2G1B induces various effects depending on the cell type, such as activation of the mitogen-activated protein kinase (MAPK) cascade to induce cell proliferation, the production of lipid mediators, selective release of arachidonic acid in bone marrow-derived mast cells. In neutrophils, binding of sPLA2-IB/PLA2G1B can activate p38 MAPK to stimulate elastase release and cell adhesion. May be involved in responses in pro-inflammatory cytokine productions during endotoxic shock. Also has endocytic properties and rapidly internalizes sPLA2 ligands, which is particularly important for the clearance of extracellular sPLA2s to protect their potent enzymatic activities. The soluble secretory phospholipase A2 receptor form is circulating and acts as a negative regulator of sPLA2 functions by blocking the biological functions of sPLA2-IB/PLA2G1B and sPLA2-X/PLA2G10. In Pongo abelii (Sumatran orangutan), this protein is Secretory phospholipase A2 receptor (PLA2R1).